The chain runs to 536 residues: Phosphoenolpyruvate carboxykinase (ATP) (536 aa).

3 residues coordinate substrate: Arg-61, Tyr-195, and Lys-201. ATP contacts are provided by residues Lys-201, His-220, and 236–244 (GLSGTGKTT). 2 residues coordinate Mn(2+): Lys-201 and His-220. A Mn(2+)-binding site is contributed by Asp-257. The ATP site is built by Glu-285, Arg-322, and Thr-447. Substrate is bound at residue Arg-322.

Belongs to the phosphoenolpyruvate carboxykinase (ATP) family. Mn(2+) serves as cofactor.

It is found in the cytoplasm. It catalyses the reaction oxaloacetate + ATP = phosphoenolpyruvate + ADP + CO2. The protein operates within carbohydrate biosynthesis; gluconeogenesis. Functionally, involved in the gluconeogenesis. Catalyzes the conversion of oxaloacetate (OAA) to phosphoenolpyruvate (PEP) through direct phosphoryl transfer between the nucleoside triphosphate and OAA. This Rhizobium etli (strain CIAT 652) protein is Phosphoenolpyruvate carboxykinase (ATP).